Consider the following 564-residue polypeptide: Aspyridones efflux protein (564 aa).

The span at 1–17 shows a compositional bias: low complexity; sequence MHPDQADTAAMQQQTTT. Residues 1–49 are disordered; that stretch reads MHPDQADTAAMQQQTTTECSDRSRPEKAEEGHAREHTVTRTCSREPEQT. Positions 19 to 47 are enriched in basic and acidic residues; that stretch reads CSDRSRPEKAEEGHAREHTVTRTCSREPE. The next 10 helical transmembrane spans lie at 66–86, 127–147, 158–178, 185–205, 216–236, 260–280, 287–307, 335–355, 368–388, and 392–412; these read AICL…TAIP, WTFL…ATAP, IAGC…THSV, LFMA…PPLG, WCFW…VFLF, VGTL…QWGG, SGIV…FGIV, FALG…FQGV, LPML…VTII, and APFM…LLLF. N-linked (GlcNAc...) asparagine glycosylation occurs at Asn415. The next 2 helical transmembrane spans lie at 416-436 and 454-474; these read VTAA…GFGW and IATA…VSVA. The N-linked (GlcNAc...) asparagine glycan is linked to Asn524. A helical transmembrane segment spans residues 528-548; sequence LSAFFVATIMAIMSLVGCTFV.

Belongs to the major facilitator superfamily. TCR/Tet family.

It is found in the cell membrane. Efflux pump that may be involved in the secretion of leporins. The chain is Aspyridones efflux protein (TP) from Neocamarosporium betae (Beet black rot fungus).